The chain runs to 55 residues: Large ribosomal subunit protein bL33 (55 aa).

It belongs to the bacterial ribosomal protein bL33 family.

This chain is Large ribosomal subunit protein bL33, found in Rhodopseudomonas palustris (strain BisB18).